Consider the following 577-residue polypeptide: Adenine deaminase (577 aa).

It belongs to the metallo-dependent hydrolases superfamily. Adenine deaminase family. Mn(2+) serves as cofactor.

It catalyses the reaction adenine + H2O + H(+) = hypoxanthine + NH4(+). In Geobacillus kaustophilus (strain HTA426), this protein is Adenine deaminase.